We begin with the raw amino-acid sequence, 255 residues long: Probable septum site-determining protein MinC (255 aa).

Residues 103–115 show a composition bias toward basic and acidic residues; sequence SHGRRPRGERSEE. Residues 103-136 are disordered; sequence SHGRRPRGERSEEAAEAVPAAAEPVPAPAASPAP. A compositionally biased stretch (pro residues) spans 127 to 136; the sequence is VPAPAASPAP.

The protein belongs to the MinC family. In terms of assembly, interacts with MinD and FtsZ.

Functionally, cell division inhibitor that blocks the formation of polar Z ring septums. Rapidly oscillates between the poles of the cell to destabilize FtsZ filaments that have formed before they mature into polar Z rings. Prevents FtsZ polymerization. In Ralstonia nicotianae (strain ATCC BAA-1114 / GMI1000) (Ralstonia solanacearum), this protein is Probable septum site-determining protein MinC.